We begin with the raw amino-acid sequence, 1659 residues long: eIF-2-alpha kinase GCN2 (1659 aa).

Residues 17–128 enclose the RWD domain; the sequence is NELEAIRSIY…SFTQEKLDEF (112 aa). Residues 149-170 form a disordered region; that stretch reads KEQLEKEEREKQQETIKKRSDE. Protein kinase domains lie at 256 to 527 and 599 to 981; these read LVKP…MKFL and FEEI…SGWL. Residues 605-613 and Lys628 contribute to the ATP site; that span reads LGQGAFGQV. 2 disordered regions span residues 671 to 691 and 727 to 768; these read NVFESTDEESDLSESSSDFEE and FENS…VPRR. Ser761 is modified (phosphoserine). Residue Asp835 is the Proton acceptor of the active site. Thr882 and Thr887 each carry phosphothreonine; by autocatalysis. The segment at 999 to 1519 is histidyl-tRNA synthetase-like; sequence NPSSPWQQQV…EFKRWDENSS (521 aa).

It belongs to the protein kinase superfamily. Ser/Thr protein kinase family. GCN2 subfamily. As to quaternary structure, homodimer; homodimerization is important for kinase activation by uncharged tRNAs. Interacts (via N-terminal RWD domain) with GCN1 (via N- and C-terminus); this interaction stimulates GCN2 kinase activity in a GCN20-dependent manner in response to amino acid starvation. Interacts (via N-terminus) with the GCN1-GCN20 complex on translating ribosomes in amino acid-starved cells; GCN1 may bind near the ribosomal A-site and promotes the transfer of uncharged tRNAs from the A-site to the tRNA-binding domain in GCN2 for its subsequent kinase activation, and hence allowing GCN4 translational activation and derepression of amino acid biosynthetic genes. Interacts (via C-terminus) with TIF11; this interaction is direct, occurs in amino acid-repleted cells, may be stabilized in a ribosome-dependent manner, reduces GCN2-mediated eIF-2-alpha phosphorylation but not GCN2 autophosphorylation and is lost in amino acid-starved cells and by uncharged tRNAs. Associates (via C-terminus) with ribosomes. Mg(2+) is required as a cofactor. In terms of processing, autophosphorylated, autophosphorylation on Thr-882 and Thr-887 increases kinase activity.

The protein localises to the cytoplasm. The enzyme catalyses L-seryl-[protein] + ATP = O-phospho-L-seryl-[protein] + ADP + H(+). The catalysed reaction is L-threonyl-[protein] + ATP = O-phospho-L-threonyl-[protein] + ADP + H(+). With respect to regulation, the integrated stress response (ISR) is activated in response to conditions that promote ribosome collisions: GCN1, which acts as a ribosome collision sensor, activates GCN2. The RQC pathway and the integrated stress response (ISR) antagonize each other: HEL2 prevents the activation of GCN2, while GCN2 suppresses RQC activation. Ribosome stalling-induced integrated stress response prefers ribosomes with empty A sites. The kinase activity is stimulated upon binding to uncharged tRNAs. Metabolic-stress sensing protein kinase that phosphorylates the alpha subunit of eukaryotic translation initiation factor 2 (eIF-2-alpha/SUI2) on 'Ser-52' in response to low amino acid, carbon, or purine availability. Required for adapatation to nutrient starvation by acting as a key component of the integrated stress response (ISR), by which cells alter their translational and transcriptional output in response to starvation. Converts phosphorylated eIF-2-alpha/SUI2 either to a competitive inhibitor of translation initiation factor eIF-2B, leading to a global protein synthesis repression, and thus to a reduced overall utilization of amino acids, or to a translational initiation activation of specific mRNAs, such as the transcriptional activator GCN4, and hence allowing GCN4-mediated reprogramming of transcription to alleviate nutrient depletion. Binds uncharged tRNAs. Binds to aminoacylated tRNA(Phe) less tightly than to deacylated tRNA(Phe). Binds to double-stranded RNA. In Saccharomyces cerevisiae (strain ATCC 204508 / S288c) (Baker's yeast), this protein is eIF-2-alpha kinase GCN2.